We begin with the raw amino-acid sequence, 390 residues long: O-phospho-L-seryl-tRNA:Cys-tRNA synthase 2 (390 aa).

Pyridoxal 5'-phosphate-binding positions include 83–84, asparagine 187, and 210–212; these read AR and SGH. Lysine 213 is modified (N6-(pyridoxal phosphate)lysine).

This sequence belongs to the SepCysS family. Homodimer. Interacts with SepRS. Pyridoxal 5'-phosphate serves as cofactor.

It carries out the reaction O-phospho-L-seryl-tRNA(Cys) + hydrogen sulfide + H(+) = L-cysteinyl-tRNA(Cys) + phosphate. Its function is as follows. Converts O-phospho-L-seryl-tRNA(Cys) (Sep-tRNA(Cys)) to L-cysteinyl-tRNA(Cys) (Cys-tRNA(Cys)). The protein is O-phospho-L-seryl-tRNA:Cys-tRNA synthase 2 of Archaeoglobus fulgidus (strain ATCC 49558 / DSM 4304 / JCM 9628 / NBRC 100126 / VC-16).